Consider the following 419-residue polypeptide: Tryptophan synthase beta chain (419 aa).

Lys98 is modified (N6-(pyridoxal phosphate)lysine).

Belongs to the TrpB family. In terms of assembly, tetramer of two alpha and two beta chains. Requires pyridoxal 5'-phosphate as cofactor.

It carries out the reaction (1S,2R)-1-C-(indol-3-yl)glycerol 3-phosphate + L-serine = D-glyceraldehyde 3-phosphate + L-tryptophan + H2O. It participates in amino-acid biosynthesis; L-tryptophan biosynthesis; L-tryptophan from chorismate: step 5/5. Functionally, the beta subunit is responsible for the synthesis of L-tryptophan from indole and L-serine. This is Tryptophan synthase beta chain from Ruegeria sp. (strain TM1040) (Silicibacter sp.).